The sequence spans 374 residues: S-adenosylmethionine:tRNA ribosyltransferase-isomerase (374 aa).

The protein belongs to the QueA family. As to quaternary structure, monomer.

The protein resides in the cytoplasm. The catalysed reaction is 7-aminomethyl-7-carbaguanosine(34) in tRNA + S-adenosyl-L-methionine = epoxyqueuosine(34) in tRNA + adenine + L-methionine + 2 H(+). It participates in tRNA modification; tRNA-queuosine biosynthesis. Its function is as follows. Transfers and isomerizes the ribose moiety from AdoMet to the 7-aminomethyl group of 7-deazaguanine (preQ1-tRNA) to give epoxyqueuosine (oQ-tRNA). This is S-adenosylmethionine:tRNA ribosyltransferase-isomerase from Prochlorococcus marinus (strain MIT 9301).